The primary structure comprises 190 residues: dTTP/UTP pyrophosphatase (190 aa).

Asp71 (proton acceptor) is an active-site residue.

The protein belongs to the Maf family. YhdE subfamily. The cofactor is a divalent metal cation.

It is found in the cytoplasm. The catalysed reaction is dTTP + H2O = dTMP + diphosphate + H(+). It carries out the reaction UTP + H2O = UMP + diphosphate + H(+). Nucleoside triphosphate pyrophosphatase that hydrolyzes dTTP and UTP. May have a dual role in cell division arrest and in preventing the incorporation of modified nucleotides into cellular nucleic acids. This chain is dTTP/UTP pyrophosphatase, found in Xanthomonas oryzae pv. oryzae (strain MAFF 311018).